Here is a 169-residue protein sequence, read N- to C-terminus: Holo-[acyl-carrier-protein] synthase (169 aa).

Residues D8 and E50 each contribute to the Mg(2+) site.

Belongs to the P-Pant transferase superfamily. AcpS family. Mg(2+) serves as cofactor.

The protein localises to the cytoplasm. The enzyme catalyses apo-[ACP] + CoA = holo-[ACP] + adenosine 3',5'-bisphosphate + H(+). Transfers the 4'-phosphopantetheine moiety from coenzyme A to a Ser of acyl-carrier-protein. The sequence is that of Holo-[acyl-carrier-protein] synthase from Thermotoga maritima (strain ATCC 43589 / DSM 3109 / JCM 10099 / NBRC 100826 / MSB8).